Here is a 275-residue protein sequence, read N- to C-terminus: Glucosamine-6-phosphate deaminase 2 (275 aa).

The Proton acceptor; for enolization step role is filled by Asp-72. Positions 103 to 131 (NAHILDGNASDLQAECEDFERKIKEAGGI) form a coiled coil. Asp-141 (for ring-opening step) is an active-site residue. His-143 acts as the Proton acceptor; for ring-opening step in catalysis. Glu-148 serves as the catalytic For ring-opening step.

This sequence belongs to the glucosamine/galactosamine-6-phosphate isomerase family. Homohexamer.

It localises to the cytoplasm. It carries out the reaction alpha-D-glucosamine 6-phosphate + H2O = beta-D-fructose 6-phosphate + NH4(+). Functionally, catalyzes the reversible conversion of alpha-D-glucosamine 6-phosphate (GlcN-6P) into beta-D-fructose 6-phosphate (Fru-6P) and ammonium ion, a regulatory reaction step in de novo uridine diphosphate-N-acetyl-alpha-D-glucosamine (UDP-GlcNAc) biosynthesis via hexosamine pathway. This chain is Glucosamine-6-phosphate deaminase 2, found in Xenopus tropicalis (Western clawed frog).